The following is a 196-amino-acid chain: Translation machinery-associated protein 22 (196 aa).

Positions 111 to 182 (IIIKRIERNK…EAKEYIEKLL (72 aa)) constitute an SUI1 domain.

It belongs to the DENR family. As to quaternary structure, interacts with the 40S ribosomal subunit.

It localises to the cytoplasm. The polypeptide is Translation machinery-associated protein 22 (TMA22) (Lodderomyces elongisporus (strain ATCC 11503 / CBS 2605 / JCM 1781 / NBRC 1676 / NRRL YB-4239) (Yeast)).